A 297-amino-acid chain; its full sequence is Mitochondrial citrate transporter A (297 aa).

3 Solcar repeats span residues 12 to 91 (PSSL…LKSL), 102 to 188 (PKTV…LKQM), and 199 to 286 (LGTA…TMDA). Transmembrane regions (helical) follow at residues 18–31 (IIAG…EIAI), 61–81 (SQWY…AGIR), 99–119 (ISGP…SLLA), 160–180 (FFQG…TRFS), 192–212 (YVAP…GIAG), and 251–272 (KDEG…LIMS).

The protein belongs to the mitochondrial carrier (TC 2.A.29) family.

It localises to the mitochondrion inner membrane. It catalyses the reaction citrate(in) + H(+)(in) = citrate(out) + H(+)(out). Its function is as follows. Mitochondrial transporter that mediates citrate export from mitochondria to cytoplasm. Both ctpA, ctpB, and ctpD play important roles in citric acid transport across the mitochondrial membrane and function in a redundant manner. This is Mitochondrial citrate transporter A from Aspergillus niger (strain ATCC 1015 / CBS 113.46 / FGSC A1144 / LSHB Ac4 / NCTC 3858a / NRRL 328 / USDA 3528.7).